Reading from the N-terminus, the 120-residue chain is NAD(P)H-quinone oxidoreductase subunit 3, chloroplastic (120 aa).

3 helical membrane passes run 9 to 29 (IFWT…WISG), 64 to 84 (MFAL…PWAM), and 88 to 108 (VLGV…VVGL).

The protein belongs to the complex I subunit 3 family. NDH is composed of at least 16 different subunits, 5 of which are encoded in the nucleus.

The protein resides in the plastid. It localises to the chloroplast thylakoid membrane. It carries out the reaction a plastoquinone + NADH + (n+1) H(+)(in) = a plastoquinol + NAD(+) + n H(+)(out). It catalyses the reaction a plastoquinone + NADPH + (n+1) H(+)(in) = a plastoquinol + NADP(+) + n H(+)(out). In terms of biological role, NDH shuttles electrons from NAD(P)H:plastoquinone, via FMN and iron-sulfur (Fe-S) centers, to quinones in the photosynthetic chain and possibly in a chloroplast respiratory chain. The immediate electron acceptor for the enzyme in this species is believed to be plastoquinone. Couples the redox reaction to proton translocation, and thus conserves the redox energy in a proton gradient. This chain is NAD(P)H-quinone oxidoreductase subunit 3, chloroplastic, found in Brachypodium distachyon (Purple false brome).